We begin with the raw amino-acid sequence, 414 residues long: Putative dipeptidase TRV_05564 (414 aa).

Positions 1–20 (MAALFVSLLALTSLVPVQGA) are cleaved as a signal peptide. Residues His45, Asp47, and Glu157 each contribute to the Zn(2+) site. Cys96 and Cys186 form a disulfide bridge. His184 contacts substrate. Residues His228 and His249 each contribute to the Zn(2+) site. Residues Arg260 and Asp320 each coordinate substrate. Residue Asn392 is glycosylated (N-linked (GlcNAc...) asparagine).

The protein belongs to the metallo-dependent hydrolases superfamily. Peptidase M19 family. Zn(2+) is required as a cofactor.

The enzyme catalyses an L-aminoacyl-L-amino acid + H2O = 2 an L-alpha-amino acid. Its function is as follows. Hydrolyzes a wide range of dipeptides. The sequence is that of Putative dipeptidase TRV_05564 from Trichophyton verrucosum (strain HKI 0517).